The following is a 479-amino-acid chain: Phosphatidylinositol 4-kinase type 2-beta (479 aa).

Over residues 1 to 10 (MESGSEEPDE) the composition is skewed to acidic residues. Residues 1-91 (MESGSEEPDE…PRVGAGHTGH (91 aa)) are disordered. The segment covering 18-34 (PALHAGPPAGRAAPGGA) has biased composition (low complexity). Residues 42-62 (GLEEEEEGEEDSGPEGDGEEE) show a composition bias toward acidic residues. The region spanning 118–449 (GVLPERISQG…VQMPRVIVER (332 aa)) is the PI3K/PI4K catalytic domain. Positions 124–130 (ISQGSSG) are G-loop. Residues Ser131 and Lys146 each contribute to the ATP site. An important for substrate binding region spans residues 151 to 153 (EPY). Positions 159–172 (KWTKYFHKICCPCC) are important for interaction with membranes. ATP contacts are provided by residues 255 to 258 (QLFV) and 269 to 270 (RK). An important for interaction with membranes region spans residues 262–270 (KEADYWLRK). The catalytic loop stretch occupies residues 299 to 307 (RNTDRGNDN). The segment at 340–360 (AIDNGLAFPFKHPDEWRAYPF) is activation loop. Asp342 serves as a coordination point for ATP. The segment at 355 to 364 (WRAYPFHWAW) is important for interaction with membranes.

It belongs to the PI3/PI4-kinase family. Type II PI4K subfamily.

Its subcellular location is the cytoplasm. The protein localises to the cytosol. It is found in the golgi apparatus membrane. It localises to the endoplasmic reticulum membrane. The protein resides in the cell membrane. Its subcellular location is the early endosome membrane. It catalyses the reaction a 1,2-diacyl-sn-glycero-3-phospho-(1D-myo-inositol) + ATP = a 1,2-diacyl-sn-glycero-3-phospho-(1D-myo-inositol 4-phosphate) + ADP + H(+). Its function is as follows. Contributes to the overall PI4-kinase activity of the cell. This contribution may be especially significant in plasma membrane, endosomal and Golgi compartments. The phosphorylation of phosphatidylinositol (PI) to PI4P is the first committed step in the generation of phosphatidylinositol 4,5-bisphosphate (PIP2), a precursor of the second messenger inositol 1,4,5-trisphosphate (InsP3). This Gallus gallus (Chicken) protein is Phosphatidylinositol 4-kinase type 2-beta (PI4K2B).